The following is a 64-amino-acid chain: DNA-binding protein 7 (64 aa).

K5 and K7 each carry N6-methyllysine.

The protein belongs to the 7 kDa DNA-binding/endoribonuclease P2 family. In terms of assembly, monomer.

The protein resides in the cytoplasm. Its function is as follows. Can constrain negative DNA supercoils. May be involved in maintaining the integrity of the genome at high temperature. The protein is DNA-binding protein 7 of Sulfurisphaera tokodaii (strain DSM 16993 / JCM 10545 / NBRC 100140 / 7) (Sulfolobus tokodaii).